Reading from the N-terminus, the 298-residue chain is ADP/ATP translocase 3 (298 aa).

Methionine 1 is subject to N-acetylmethionine. At 1–7 the chain is on the mitochondrial intermembrane side; the sequence is MTEQAIS. Threonine 2 bears the N-acetylthreonine; in ADP/ATP translocase 3, N-terminally processed mark. The stretch at 6 to 98 is one Solcar 1 repeat; it reads ISFAKDFLAG…FAFKDKYKQI (93 aa). The helical transmembrane segment at 8-37 threads the bilayer; sequence FAKDFLAGGIAAAISKTAVAPIERVKLLLQ. The Mitochondrial matrix portion of the chain corresponds to 38–74; that stretch reads VQHASKQIAADKQYKGIVDCIVRIPKEQGVLSFWRGN. The residue at position 52 (lysine 52) is an N6,N6,N6-trimethyllysine. A helical transmembrane segment spans residues 75 to 99; the sequence is LANVIRYFPTQALNFAFKDKYKQIF. Arginine 80 and lysine 92 together coordinate ADP. The Mitochondrial intermembrane segment spans residues 100–109; the sequence is LGGVDKHTQF. Lysine 105 carries the post-translational modification N6-acetyllysine. The chain crosses the membrane as a helical span at residues 110–130; that stretch reads WRYFAGNLASGGAAGATSLCF. Solcar repeat units follow at residues 111 to 201 and 212 to 297; these read RYFA…AKGM and VSWM…LKKV. Topologically, residues 131–178 are mitochondrial matrix; sequence VYPLDFARTRLAADVGKSGTEREFRGLGDCLVKITKSDGIRGLYQGFS. Residues 179–199 traverse the membrane as a helical segment; that stretch reads VSVQGIIIYRAAYFGVYDTAK. Residues 200–210 lie on the Mitochondrial intermembrane side of the membrane; it reads GMLPDPKNTHI. Residues 211 to 231 form a helical membrane-spanning segment; that stretch reads VVSWMIAQTVTAVAGVVSYPF. The Mitochondrial matrix portion of the chain corresponds to 232 to 273; it reads DTVRRRMMMQSGRKGADIMYTGTVDCWRKIFRDEGGKAFFKG. Position 235 (arginine 235) interacts with ADP. Residues 235–240 are important for transport activity; sequence RRRMMM. A Nucleotide carrier signature motif motif is present at residues 235-240; the sequence is RRRMMM. At lysine 268 the chain carries N6-acetyllysine. Residues 274-291 traverse the membrane as a helical segment; the sequence is AWSNVLRGMGGAFVLVLY. At 292–298 the chain is on the mitochondrial intermembrane side; it reads DELKKVI.

Belongs to the mitochondrial carrier (TC 2.A.29) family. Monomer. Found in a complex with ARL2, ARL2BP and SLC25A6/ANT3. In terms of assembly, (Microbial infection) Interacts with influenza A virus PB1-F2 protein. As to quaternary structure, (Microbial infection) Interacts with HIV-1 Vpr. Post-translationally, trimethylated by ANTKMT at Lys-52. Expressed in erythrocytes (at protein level).

The protein localises to the mitochondrion inner membrane. It is found in the membrane. The catalysed reaction is ADP(in) + ATP(out) = ADP(out) + ATP(in). It carries out the reaction H(+)(in) = H(+)(out). With respect to regulation, the matrix-open state (m-state) is inhibited by the membrane-permeable bongkrekic acid (BKA). The cytoplasmic-open state (c-state) is inhibited by the membrane-impermeable toxic inhibitor carboxyatractyloside (CATR). Proton transporter activity is inhibited by ADP:ATP antiporter activity. Functionally, ADP:ATP antiporter that mediates import of ADP into the mitochondrial matrix for ATP synthesis, and export of ATP out to fuel the cell. Cycles between the cytoplasmic-open state (c-state) and the matrix-open state (m-state): operates by the alternating access mechanism with a single substrate-binding site intermittently exposed to either the cytosolic (c-state) or matrix (m-state) side of the inner mitochondrial membrane. In addition to its ADP:ATP antiporter activity, also involved in mitochondrial uncoupling and mitochondrial permeability transition pore (mPTP) activity. Plays a role in mitochondrial uncoupling by acting as a proton transporter: proton transport uncouples the proton flows via the electron transport chain and ATP synthase to reduce the efficiency of ATP production and cause mitochondrial thermogenesis. Proton transporter activity is inhibited by ADP:ATP antiporter activity, suggesting that SLC25A6/ANT3 acts as a master regulator of mitochondrial energy output by maintaining a delicate balance between ATP production (ADP:ATP antiporter activity) and thermogenesis (proton transporter activity). Proton transporter activity requires free fatty acids as cofactor, but does not transport it. Also plays a key role in mPTP opening, a non-specific pore that enables free passage of the mitochondrial membranes to solutes of up to 1.5 kDa, and which contributes to cell death. It is however unclear if SLC25A6/ANT3 constitutes a pore-forming component of mPTP or regulates it. This Homo sapiens (Human) protein is ADP/ATP translocase 3.